The following is a 448-amino-acid chain: Glucose-6-phosphate isomerase (448 aa).

Residue Glu290 is the Proton donor of the active site. Catalysis depends on residues His311 and Lys425.

Belongs to the GPI family.

The protein localises to the cytoplasm. It catalyses the reaction alpha-D-glucose 6-phosphate = beta-D-fructose 6-phosphate. The protein operates within carbohydrate biosynthesis; gluconeogenesis. It functions in the pathway carbohydrate degradation; glycolysis; D-glyceraldehyde 3-phosphate and glycerone phosphate from D-glucose: step 2/4. In terms of biological role, catalyzes the reversible isomerization of glucose-6-phosphate to fructose-6-phosphate. In Levilactobacillus brevis (strain ATCC 367 / BCRC 12310 / CIP 105137 / JCM 1170 / LMG 11437 / NCIMB 947 / NCTC 947) (Lactobacillus brevis), this protein is Glucose-6-phosphate isomerase.